The following is a 66-amino-acid chain: Large ribosomal subunit protein uL29 (66 aa).

It belongs to the universal ribosomal protein uL29 family.

The protein is Large ribosomal subunit protein uL29 of Borrelia recurrentis (strain A1).